The following is a 506-amino-acid chain: Aluminum-activated malate transporter 7 (506 aa).

The next 6 membrane-spanning stretches (helical) occupy residues 28–48, 52–72, 78–98, 104–124, 130–150, and 166–186; these read VGLV…YDSF, AMWA…ATLG, VAAT…ASMS, PILL…VRFF, RYDY…VSGF, and VIIG…VWAG. The interval 461-485 is disordered; that stretch reads DDGNNDDTSKNDNGSKEVSIHEKHE. A compositionally biased stretch (basic and acidic residues) spans 467–485; it reads DTSKNDNGSKEVSIHEKHE.

It belongs to the aromatic acid exporter (TC 2.A.85) family.

It is found in the membrane. Functionally, malate transporter. The protein is Aluminum-activated malate transporter 7 (ALMT7) of Arabidopsis thaliana (Mouse-ear cress).